The sequence spans 132 residues: UPF0299 membrane protein CKO_00648 (132 aa).

The next 4 helical transmembrane spans lie at 7 to 27 (IIWQ…AGIF), 31 to 51 (LLPI…VLLA), 63 to 83 (GCYV…VGVM), and 93 to 113 (FGPV…VVSW).

Belongs to the UPF0299 family.

It localises to the cell inner membrane. The chain is UPF0299 membrane protein CKO_00648 from Citrobacter koseri (strain ATCC BAA-895 / CDC 4225-83 / SGSC4696).